The primary structure comprises 274 residues: Ubiquinone biosynthesis O-methyltransferase, mitochondrial (274 aa).

A mitochondrion-targeting transit peptide spans 1 to 30; that stretch reads MNSMNILNKVKNVKSYTRLVRQGFLSQQRN. 4 residues coordinate S-adenosyl-L-methionine: R65, G88, D109, and M154. Mg(2+) is bound by residues E155, E158, and H159.

It belongs to the class I-like SAM-binding methyltransferase superfamily. UbiG/COQ3 family. Component of a multi-subunit COQ enzyme complex, composed of at least coq3, coq4, coq5, coq6, coq7 and coq9. Requires Mg(2+) as cofactor.

It is found in the mitochondrion inner membrane. It catalyses the reaction 3,4-dihydroxy-5-(all-trans-decaprenyl)benzoate + S-adenosyl-L-methionine = 4-hydroxy-3-methoxy-5-(all-trans-decaprenyl)benzoate + S-adenosyl-L-homocysteine + H(+). It carries out the reaction a 3-demethylubiquinone + S-adenosyl-L-methionine = a ubiquinone + S-adenosyl-L-homocysteine. The enzyme catalyses 3-demethylubiquinol-10 + S-adenosyl-L-methionine = ubiquinol-10 + S-adenosyl-L-homocysteine + H(+). It functions in the pathway cofactor biosynthesis; ubiquinone biosynthesis. In terms of biological role, O-methyltransferase required for two non-consecutive steps during ubiquinone biosynthesis. Catalyzes the 2 O-methylation of 3,4-dihydroxy-5-(all-trans-decaprenyl)benzoic acid into 4-hydroxy-3-methoxy-5-(all-trans-decaprenyl)benzoic acid. Also catalyzes the last step of ubiquinone biosynthesis by mediating methylation of 3-demethylubiquinone into ubiquinone. Also able to mediate the methylation of 3-demethylubiquinol-10 into ubiquinol-10. This Schizosaccharomyces pombe (strain 972 / ATCC 24843) (Fission yeast) protein is Ubiquinone biosynthesis O-methyltransferase, mitochondrial.